Reading from the N-terminus, the 347-residue chain is MEFCVLFGGASFEHEISIVSAIALKGVLKDRIKYFIFLDENHHFYLIEESNMHSKYFAQIKEKKLPPLILTHNGLLKNSFLGAKIIELPLVINLVHGGDGEDGKLASLLEFYRIAFIGPRIEASVLSYNKYLTKLYAKDLGVKTLDHVLLNEKNRANALDLMNFNFPFIIKPNNAGSSLGVNVVKEEKELVYALDGAFEYSKEVLIEPFIQGVKEYNLAGCKIKKDFCFSYVEEPNKQEFLDFKQKYLDFSRNKAPKANLSNALEEQLKENFKKLYNDLFDGAIIRCDFFVIKNEVYLNEINPIPGSLANYLFDDFKTTLENLAQSLPKTPKIQIKNSYLLQIQKNK.

One can recognise an ATP-grasp domain in the interval 134–332 (KLYAKDLGVK…LAQSLPKTPK (199 aa)). Residue 161–216 (LMNFNFPFIIKPNNAGSSLGVNVVKEEKELVYALDGAFEYSKEVLIEPFIQGVKEY) coordinates ATP. Mg(2+) contacts are provided by Asp-288, Glu-300, and Asn-302.

It belongs to the D-alanine--D-alanine ligase family. Mg(2+) serves as cofactor. The cofactor is Mn(2+).

Its subcellular location is the cytoplasm. The catalysed reaction is 2 D-alanine + ATP = D-alanyl-D-alanine + ADP + phosphate + H(+). The protein operates within cell wall biogenesis; peptidoglycan biosynthesis. Cell wall formation. This Helicobacter pylori (strain ATCC 700392 / 26695) (Campylobacter pylori) protein is D-alanine--D-alanine ligase.